Here is a 197-residue protein sequence, read N- to C-terminus: Ribonuclease HII (197 aa).

The 187-residue stretch at 11 to 197 (HLIAGVDEVG…FAPVKKILGL (187 aa)) folds into the RNase H type-2 domain. Positions 17, 18, and 109 each coordinate a divalent metal cation.

This sequence belongs to the RNase HII family. Mn(2+) serves as cofactor. Requires Mg(2+) as cofactor.

The protein localises to the cytoplasm. The enzyme catalyses Endonucleolytic cleavage to 5'-phosphomonoester.. Its function is as follows. Endonuclease that specifically degrades the RNA of RNA-DNA hybrids. The polypeptide is Ribonuclease HII (Actinobacillus pleuropneumoniae serotype 5b (strain L20)).